A 431-amino-acid chain; its full sequence is Adenylosuccinate synthetase (431 aa).

GTP is bound by residues 13–19 (GDEGKGK) and 41–43 (GHT). D14 serves as the catalytic Proton acceptor. D14 and G41 together coordinate Mg(2+). IMP contacts are provided by residues 14–17 (DEGK), 39–42 (NAGH), T130, R144, Q225, T240, and R304. Catalysis depends on H42, which acts as the Proton donor. 300-306 (ATTGRKR) contributes to the substrate binding site. GTP-binding positions include R306, 332 to 334 (KLD), and 415 to 417 (STG).

The protein belongs to the adenylosuccinate synthetase family. As to quaternary structure, homodimer. The cofactor is Mg(2+).

The protein localises to the cytoplasm. It catalyses the reaction IMP + L-aspartate + GTP = N(6)-(1,2-dicarboxyethyl)-AMP + GDP + phosphate + 2 H(+). Its pathway is purine metabolism; AMP biosynthesis via de novo pathway; AMP from IMP: step 1/2. In terms of biological role, plays an important role in the de novo pathway of purine nucleotide biosynthesis. Catalyzes the first committed step in the biosynthesis of AMP from IMP. This is Adenylosuccinate synthetase from Shewanella frigidimarina (strain NCIMB 400).